We begin with the raw amino-acid sequence, 403 residues long: Probable protein phosphatase 2C 8 (403 aa).

Positions 42 to 80 (LGRTASAVAEDDAAKRVRPASDSSSDSSESAKVAPEPTA) are disordered. Over residues 62–71 (SDSSSDSSES) the composition is skewed to low complexity. Residues 90–388 (SHGAVSVIGR…DNISVVVVEL (299 aa)) form the PPM-type phosphatase domain. Mn(2+) contacts are provided by aspartate 144, glycine 145, aspartate 325, and aspartate 379.

It belongs to the PP2C family. Requires Mg(2+) as cofactor. It depends on Mn(2+) as a cofactor.

It catalyses the reaction O-phospho-L-seryl-[protein] + H2O = L-seryl-[protein] + phosphate. The enzyme catalyses O-phospho-L-threonyl-[protein] + H2O = L-threonyl-[protein] + phosphate. The protein is Probable protein phosphatase 2C 8 of Oryza sativa subsp. japonica (Rice).